The sequence spans 89 residues: Large ribosomal subunit protein bL27 (89 aa).

A disordered region spans residues 1 to 20; the sequence is MAHKKAGGSSRNGRDSAGKR.

It belongs to the bacterial ribosomal protein bL27 family.

The polypeptide is Large ribosomal subunit protein bL27 (Rhodopseudomonas palustris (strain HaA2)).